The primary structure comprises 252 residues: Transmembrane ascorbate-dependent reductase CYB561 (252 aa).

At M1 the chain carries N-acetylmethionine. Residues 1–17 (MEGPASPARAPGALPYY) lie on the Cytoplasmic side of the membrane. Residues 18 to 38 (VAFSQLLGLIVVAMTGAWLGM) traverse the membrane as a helical segment. The 202-residue stretch at 20–221 (FSQLLGLIVV…FATVILYILT (202 aa)) folds into the Cytochrome b561 domain. At 39-52 (YRGGIAWESALQFN) the chain is on the vesicular side. Residues 53 to 73 (VHPLCMIIGLVFLQGDALLVY) traverse the membrane as a helical segment. Residues H54, R74, and K81 each coordinate heme b. Over 74-86 (RVFRNEAKRTTKV) the chain is Cytoplasmic. K81 and K85 together coordinate L-ascorbate. A helical transmembrane segment spans residues 87–107 (LHGLLHVFAFVIALVGLVAVF). Heme b-binding positions include H88, 117-120 (DLYS), and H122. Residues 108–125 (EHHRKKGYADLYSLHSWC) lie on the Vesicular side of the membrane. A helical transmembrane segment spans residues 126–146 (GILVFALFFAQWLVGFSFFLF). The Cytoplasmic portion of the chain corresponds to 147–159 (PGASFSLRSRYRP). R154 contacts L-ascorbate. Residues 160–180 (QHVFFGAAIFLLSVATALLGL) traverse the membrane as a helical segment. Residues H161 and E182 each coordinate heme b. At 181 to 199 (KEALLFELGTKYSMFEPEG) the chain is on the vesicular side. A helical membrane pass occupies residues 200 to 220 (VLANVLGLLLATFATVILYIL). Over 221–252 (TRADWKRPLQAEEQALSMDFKTLTEGDSPSSQ) the chain is Cytoplasmic. K226 lines the heme b pocket. Phosphoserine is present on residues S248 and S250.

Heme b serves as cofactor. As to expression, expressed in the adrenal medulla and all brain regions, but not in visceral organs.

It localises to the cytoplasmic vesicle. Its subcellular location is the secretory vesicle. The protein localises to the chromaffin granule membrane. The catalysed reaction is monodehydro-L-ascorbate radical(out) + L-ascorbate(in) = monodehydro-L-ascorbate radical(in) + L-ascorbate(out). Its function is as follows. Transmembrane reductase that uses ascorbate as an electron donor in the cytoplasm and transfers electrons across membranes to reduce monodehydro-L-ascorbate radical in the lumen of secretory vesicles. It is therefore involved the regeneration and homeostasis within secretory vesicles of ascorbate which in turn provides reducing equivalents needed to support the activity of intravesicular enzymes. This chain is Transmembrane ascorbate-dependent reductase CYB561 (CYB561), found in Bos taurus (Bovine).